The following is a 100-amino-acid chain: MIREERLLKVLRAPHVSEKASTAMEKSNTIVLKVAKDATKAEIKAAVQKLFEVEVEVVNTLVVKGKVKRHGQRIGRRSDWKKAYVTLKEGQNLDFVGGAE.

Belongs to the universal ribosomal protein uL23 family. As to quaternary structure, part of the 50S ribosomal subunit. Contacts protein L29, and trigger factor when it is bound to the ribosome.

In terms of biological role, one of the early assembly proteins it binds 23S rRNA. One of the proteins that surrounds the polypeptide exit tunnel on the outside of the ribosome. Forms the main docking site for trigger factor binding to the ribosome. The polypeptide is Large ribosomal subunit protein uL23 (Escherichia coli O157:H7).